A 146-amino-acid polypeptide reads, in one-letter code: MPVIKVQTNVKKVSDGFEVRLAIHMAKVMKRPESQIFVSLDMNSRMTRGQLTDPLAVLDVTSSTVLTPILTEEYTVALCEFFSQELALDSDAVLINYRSLSPELIGFNGHILTENRPFISTDRARFIIGVLGIAFLAFLLQFLKYI.

It belongs to the MIF family.

This chain is MIF-like protein mif-3 (mif-3), found in Caenorhabditis elegans.